A 239-amino-acid polypeptide reads, in one-letter code: Ubiquinone biosynthesis O-methyltransferase (239 aa).

S-adenosyl-L-methionine-binding residues include arginine 45, glycine 64, aspartate 85, and methionine 129.

It belongs to the methyltransferase superfamily. UbiG/COQ3 family.

It catalyses the reaction a 3-demethylubiquinol + S-adenosyl-L-methionine = a ubiquinol + S-adenosyl-L-homocysteine + H(+). The catalysed reaction is a 3-(all-trans-polyprenyl)benzene-1,2-diol + S-adenosyl-L-methionine = a 2-methoxy-6-(all-trans-polyprenyl)phenol + S-adenosyl-L-homocysteine + H(+). It participates in cofactor biosynthesis; ubiquinone biosynthesis. Its function is as follows. O-methyltransferase that catalyzes the 2 O-methylation steps in the ubiquinone biosynthetic pathway. The sequence is that of Ubiquinone biosynthesis O-methyltransferase from Nitrosospira multiformis (strain ATCC 25196 / NCIMB 11849 / C 71).